The primary structure comprises 931 residues: Valine--tRNA ligase (931 aa).

The 'HIGH' region signature appears at 43-53; it reads PNVTGALHIGH. Residues 351-370 are disordered; it reads IPHTDKDGNAHDAEPRTIQT. Positions 353–365 are enriched in basic and acidic residues; the sequence is HTDKDGNAHDAEP. The short motif at 552-556 is the 'KMSKS' region element; that stretch reads KMSKS. Lys555 is an ATP binding site. The interval 691-717 is disordered; that stretch reads LQGRGLGEGDEAVPAPADGPLSPALSP. Residues 864-930 are a coiled coil; the sequence is VIDIAAERER…DRLSAALARL (67 aa).

This sequence belongs to the class-I aminoacyl-tRNA synthetase family. ValS type 1 subfamily. In terms of assembly, monomer.

Its subcellular location is the cytoplasm. The catalysed reaction is tRNA(Val) + L-valine + ATP = L-valyl-tRNA(Val) + AMP + diphosphate. Its function is as follows. Catalyzes the attachment of valine to tRNA(Val). As ValRS can inadvertently accommodate and process structurally similar amino acids such as threonine, to avoid such errors, it has a 'posttransfer' editing activity that hydrolyzes mischarged Thr-tRNA(Val) in a tRNA-dependent manner. This is Valine--tRNA ligase from Sphingopyxis alaskensis (strain DSM 13593 / LMG 18877 / RB2256) (Sphingomonas alaskensis).